Consider the following 300-residue polypeptide: MLKIGSHVGMSGKEAFFGSAKEAHSYDANTFMVYTGAPQNTRRKDISDLRLEEGFEFMKQHGISDIVIHAPYIINLGNSVNLDTYSLAVDFLAKEMERTKAFRSKYLVLHPGAHVGAGVDAGIKQIVQGLNEVLTRDTDLYIALETMAGKGSEIGRNFEELARIYDGVKYNDRLRVCFDTCHTNDAGYDVVNDFDGVIEQFDKLIGKEQIAVFHINDSKNDRGASKDRHENIGFGTLGFDAISYIVHHSDFIEVPKILETPYVSLPNEKEKSLPPYRYEIEMLRNSVFDPQILEKIQNNR.

Residues histidine 69, histidine 110, glutamate 145, aspartate 179, histidine 182, histidine 214, aspartate 227, histidine 229, and glutamate 259 each contribute to the Zn(2+) site.

The protein belongs to the AP endonuclease 2 family. The cofactor is Zn(2+).

It catalyses the reaction Endonucleolytic cleavage to 5'-phosphooligonucleotide end-products.. Endonuclease IV plays a role in DNA repair. It cleaves phosphodiester bonds at apurinic or apyrimidinic (AP) sites, generating a 3'-hydroxyl group and a 5'-terminal sugar phosphate. This chain is Probable endonuclease 4, found in Lachnoclostridium phytofermentans (strain ATCC 700394 / DSM 18823 / ISDg) (Clostridium phytofermentans).